The sequence spans 238 residues: Large ribosomal subunit protein uL1 (238 aa).

This sequence belongs to the universal ribosomal protein uL1 family. As to quaternary structure, part of the 50S ribosomal subunit.

Its function is as follows. Binds directly to 23S rRNA. The L1 stalk is quite mobile in the ribosome, and is involved in E site tRNA release. Functionally, protein L1 is also a translational repressor protein, it controls the translation of the L11 operon by binding to its mRNA. This is Large ribosomal subunit protein uL1 from Gloeobacter violaceus (strain ATCC 29082 / PCC 7421).